The following is a 296-amino-acid chain: Glycine--tRNA ligase alpha subunit (296 aa).

This sequence belongs to the class-II aminoacyl-tRNA synthetase family. Tetramer of two alpha and two beta subunits.

It is found in the cytoplasm. The enzyme catalyses tRNA(Gly) + glycine + ATP = glycyl-tRNA(Gly) + AMP + diphosphate. The sequence is that of Glycine--tRNA ligase alpha subunit from Listeria innocua serovar 6a (strain ATCC BAA-680 / CLIP 11262).